The chain runs to 227 residues: 6,7-dimethyl-8-ribityllumazine synthase, chloroplastic (227 aa).

The transit peptide at 1–71 (MKSLASPPCL…LRSSFVQTAA (71 aa)) directs the protein to the chloroplast. Residues phenylalanine 94, 128-130 (SFE), and 152-154 (AVI) each bind 5-amino-6-(D-ribitylamino)uracil. A (2S)-2-hydroxy-3-oxobutyl phosphate-binding site is contributed by 157 to 158 (DT). Histidine 160 acts as the Proton donor in catalysis. Phenylalanine 185 is a binding site for 5-amino-6-(D-ribitylamino)uracil. Residue arginine 199 participates in (2S)-2-hydroxy-3-oxobutyl phosphate binding.

Belongs to the DMRL synthase family. Oligomer forming an icosahedral capsid.

It localises to the plastid. The protein localises to the chloroplast. The enzyme catalyses (2S)-2-hydroxy-3-oxobutyl phosphate + 5-amino-6-(D-ribitylamino)uracil = 6,7-dimethyl-8-(1-D-ribityl)lumazine + phosphate + 2 H2O + H(+). It functions in the pathway cofactor biosynthesis; riboflavin biosynthesis; riboflavin from 2-hydroxy-3-oxobutyl phosphate and 5-amino-6-(D-ribitylamino)uracil: step 1/2. Its function is as follows. Catalyzes the formation of 6,7-dimethyl-8-ribityllumazine by condensation of 5-amino-6-(D-ribitylamino)uracil with 3,4-dihydroxy-2-butanone 4-phosphate. This is the penultimate step in the biosynthesis of riboflavin. The sequence is that of 6,7-dimethyl-8-ribityllumazine synthase, chloroplastic from Arabidopsis thaliana (Mouse-ear cress).